The following is a 313-amino-acid chain: 18S rRNA aminocarboxypropyltransferase (313 aa).

The segment at 1 to 30 (MGKGKNKMHEPKNGRPQRGANGHSSRQNHR) is disordered. Residues Ser62, Val110, Leu133, and Trp148 each contribute to the S-adenosyl-L-methionine site. Over residues 215-228 (KETQERKSRAKEED) the composition is skewed to basic and acidic residues. A disordered region spans residues 215 to 313 (KETQERKSRA…SYDPLGNLIR (99 aa)). Positions 237 to 246 (RRGNGSQSDT) are enriched in polar residues. Residues 247–257 (SESEENSEQSD) are compositionally biased toward acidic residues. Residues Ser286 and Ser289 each carry the phosphoserine modification.

This sequence belongs to the TDD superfamily. TSR3 family.

Its subcellular location is the cytoplasm. The protein localises to the nucleus. The enzyme catalyses an N(1)-methylpseudouridine in rRNA + S-adenosyl-L-methionine = N(1)-methyl-N(3)-[(3S)-3-amino-3-carboxypropyl]pseudouridine in rRNA + S-methyl-5'-thioadenosine + H(+). It catalyses the reaction N(1)-methylpseudouridine(1191) in yeast 18S rRNA + S-adenosyl-L-methionine = N(1)-methyl-N(3)-[(3S)-3-amino-3-carboxypropyl]pseudouridine(1191) in yeast 18S rRNA + S-methyl-5'-thioadenosine + H(+). Functionally, aminocarboxypropyltransferase that catalyzes the aminocarboxypropyl transfer on pseudouridine at position 1191 (Psi1191) in 18S rRNA. It constitutes the last step in biosynthesis of the hypermodified N1-methyl-N3-(3-amino-3-carboxypropyl) pseudouridine (m1acp3-Psi) conserved in eukaryotic 18S rRNA. Required for processing 35S pre-rRNA at site D. In Saccharomyces cerevisiae (strain ATCC 204508 / S288c) (Baker's yeast), this protein is 18S rRNA aminocarboxypropyltransferase.